We begin with the raw amino-acid sequence, 427 residues long: Probable threonylcarbamoyladenosine tRNA methylthiotransferase (427 aa).

An MTTase N-terminal domain is found at 12–118; it reads MRVYVEGYGC…AGEILKNYVE (107 aa). Residues Cys21, Cys57, Cys86, Cys155, Cys159, and Cys162 each contribute to the [4Fe-4S] cluster site. In terms of domain architecture, Radical SAM core spans 141–370; the sequence is LKPSLITPLP…DKLRRELSYL (230 aa). Residues 373 to 427 enclose the TRAM domain; that stretch reads KKYIGKAMKVLVLDEGKGYTDNFKVVKFEGGEVGEFRKVKITDAKTFGLKGELIL.

Belongs to the methylthiotransferase family. CDKAL1 subfamily. It depends on [4Fe-4S] cluster as a cofactor.

It carries out the reaction N(6)-L-threonylcarbamoyladenosine(37) in tRNA + (sulfur carrier)-SH + AH2 + 2 S-adenosyl-L-methionine = 2-methylsulfanyl-N(6)-L-threonylcarbamoyladenosine(37) in tRNA + (sulfur carrier)-H + 5'-deoxyadenosine + L-methionine + A + S-adenosyl-L-homocysteine + 2 H(+). Its function is as follows. Catalyzes the methylthiolation of N6-threonylcarbamoyladenosine (t(6)A), leading to the formation of 2-methylthio-N6-threonylcarbamoyladenosine (ms(2)t(6)A) at position 37 in tRNAs that read codons beginning with adenine. In Methanocaldococcus jannaschii (strain ATCC 43067 / DSM 2661 / JAL-1 / JCM 10045 / NBRC 100440) (Methanococcus jannaschii), this protein is Probable threonylcarbamoyladenosine tRNA methylthiotransferase.